The primary structure comprises 955 residues: Serine-aspartate repeat-containing protein C (955 aa).

A signal peptide spans 1–50 (MNNKKTVTNRKGMIPNRLNKFSIRKYSVGTASILVGTTLIFGLSGHEAKA). The interval 51–166 (AEHTNGELNQ…TPKTTTIKPR (116 aa)) is disordered. Residues 51 to 495 (AEHTNGELNQ…GSSTANGDQK (445 aa)) are ligand binding A region. The segment covering 56–71 (GELNQSKNETTAPSEN) has biased composition (polar residues). A compositionally biased stretch (basic and acidic residues) spans 72–83 (KTTEKVDSHQLK). A compositionally biased stretch (polar residues) spans 84–114 (DNTQTATADQPKVTMSDSATFKETSSNMQSP). Positions 115–132 (QNATASQSTTQTSNVTTN) are enriched in low complexity. Over residues 133–164 (DKSSTTYSNETDKSNLTQAKDVSATPKTTTIK) the composition is skewed to polar residues. 2 CNA-B domains span residues 496 to 606 (KYNL…YKTP) and 607 to 717 (KYSL…EEET). The interval 678–935 (TQTGTNTTED…NNSNNGTLFG (258 aa)) is disordered. Acidic residues-rich tracts occupy residues 685 to 695 (TEDDKDADGGE) and 712 to 894 (YYEE…DSDS). Positions 918–922 (LPETG) match the LPXTG sorting signal motif. A compositionally biased stretch (low complexity) spans 920–935 (ETGSENNNSNNGTLFG). Thr921 is modified (pentaglycyl murein peptidoglycan amidated threonine). The propeptide at 922–955 (GSENNNSNNGTLFGGLFAALGSLLLFGRRKKQNK) is removed by sortase.

The protein belongs to the serine-aspartate repeat-containing protein (SDr) family. Homodimerizes; via N2-Domain. Interacts with host NRXN1; this interaction mediates bacterial attachment to host cells.

The protein resides in the secreted. It localises to the cell wall. Cell surface-associated calcium-binding protein which plays an important role in adhesion and pathogenesis. Mediates interactions with components of the extracellular matrix such as host NRXN1 to promote bacterial adhesion. This chain is Serine-aspartate repeat-containing protein C (sdrC), found in Staphylococcus aureus (strain MW2).